Here is a 538-residue protein sequence, read N- to C-terminus: Zinc finger protein 155 (538 aa).

The region spanning 8–78 (VTFKDVAVVF…GTATQREGNS (71 aa)) is the KRAB domain. 11 consecutive C2H2-type zinc fingers follow at residues 176–198 (YTCD…QRVH), 204–226 (FMCD…QRVH), 232–254 (FKCE…RKLH), 260–282 (YICE…KRIH), 288–310 (FKCD…SMVH), 316–338 (FRCD…CMVH), 344–366 (YRCE…QVVH), 372–394 (YNCK…QRVH), 400–422 (FKCE…QRSH), 428–450 (YKCE…QRVH), and 456–478 (YNCK…KRLH). Residues 484–506 (FKCEDCGKRLVHRTYRKDQPRDY) form a C2H2-type 12; degenerate zinc finger.

It belongs to the krueppel C2H2-type zinc-finger protein family.

It is found in the nucleus. May be involved in transcriptional regulation. This is Zinc finger protein 155 (ZNF155) from Homo sapiens (Human).